Consider the following 172-residue polypeptide: MKIALYAGSFDPLTNGHIAILQGSFVLADKVVVAIGIQAKKKSLFSFEERVDLITQVGKDLLSIGPDRLQVISFDTLLIDKAREIGASFLIRGLRDGTDLDYEMQMAGMNGVMAPELQTVFLPASVSGRAITSTLVRQIASMGGDVSAFVPPNVERALHLKFQSSRENGCVS.

Residue Ser-9 participates in substrate binding. Residues 9 to 10 and His-17 contribute to the ATP site; that span reads SF. Positions 41, 78, and 92 each coordinate substrate. Residues 93 to 95, Glu-103, and 128 to 134 contribute to the ATP site; these read GLR and GRAITST.

This sequence belongs to the bacterial CoaD family. In terms of assembly, homohexamer. The cofactor is Mg(2+).

The protein localises to the cytoplasm. It carries out the reaction (R)-4'-phosphopantetheine + ATP + H(+) = 3'-dephospho-CoA + diphosphate. The protein operates within cofactor biosynthesis; coenzyme A biosynthesis; CoA from (R)-pantothenate: step 4/5. Reversibly transfers an adenylyl group from ATP to 4'-phosphopantetheine, yielding dephospho-CoA (dPCoA) and pyrophosphate. The sequence is that of Phosphopantetheine adenylyltransferase from Bartonella quintana (strain Toulouse) (Rochalimaea quintana).